Reading from the N-terminus, the 208-residue chain is Thymidylate kinase (208 aa).

ATP is bound at residue 10-17 (GIDGSGKT).

Belongs to the thymidylate kinase family.

The catalysed reaction is dTMP + ATP = dTDP + ADP. Its function is as follows. Phosphorylation of dTMP to form dTDP in both de novo and salvage pathways of dTTP synthesis. This is Thymidylate kinase from Ligilactobacillus salivarius (strain UCC118) (Lactobacillus salivarius).